Consider the following 562-residue polypeptide: F-box only protein 33 (562 aa).

The F-box domain occupies 68-114 (AAGAASLPSELIVHIFSFLPAPDRLRASASCSHWRECLFYPALWPQL). A compositionally biased stretch (gly residues) spans 155–173 (GGGPGDGGSGGGTDTGTGG). The interval 155–176 (GGGPGDGGSGGGTDTGTGGEDG) is disordered.

Part of the SCF (SKP1-CUL1-F-box) E3 ubiquitin-protein ligase complex SCF(FBXO33) formed of CUL1, SKP1, RBX1 and FBXO33. Interacts via its N-terminus with YBX1 CSD domain. Directly interacts with SKP1 and CUL1.

The protein operates within protein modification; protein ubiquitination. Substrate recognition component of a SCF (SKP1-CUL1-F-box protein) E3 ubiquitin-protein ligase complex which mediates the ubiquitination and subsequent proteasomal degradation of target proteins. Probably recognizes and binds to phosphorylated target proteins. Recognizes YBX1. The chain is F-box only protein 33 (Fbxo33) from Mus musculus (Mouse).